A 334-amino-acid chain; its full sequence is tRNA N6-adenosine threonylcarbamoyltransferase (334 aa).

Residues histidine 110 and histidine 114 each contribute to the Fe cation site. Residues isoleucine 133–glycine 137, aspartate 166, glycine 179, aspartate 183, and asparagine 275 contribute to the substrate site. Aspartate 303 contributes to the Fe cation binding site.

It belongs to the KAE1 / TsaD family. Requires Fe(2+) as cofactor.

The protein localises to the cytoplasm. The catalysed reaction is L-threonylcarbamoyladenylate + adenosine(37) in tRNA = N(6)-L-threonylcarbamoyladenosine(37) in tRNA + AMP + H(+). Required for the formation of a threonylcarbamoyl group on adenosine at position 37 (t(6)A37) in tRNAs that read codons beginning with adenine. Is involved in the transfer of the threonylcarbamoyl moiety of threonylcarbamoyl-AMP (TC-AMP) to the N6 group of A37, together with TsaE and TsaB. TsaD likely plays a direct catalytic role in this reaction. The sequence is that of tRNA N6-adenosine threonylcarbamoyltransferase from Salinibacter ruber (strain DSM 13855 / M31).